We begin with the raw amino-acid sequence, 417 residues long: Probable serpin E3 (417 aa).

Residues 1 to 24 form the signal peptide; that stretch reads MPQLSASSLFICLWLVDLCHVANS. N-linked (GlcNAc...) asparagine glycans are attached at residues asparagine 50, asparagine 106, asparagine 140, asparagine 147, and asparagine 152.

The protein belongs to the serpin family.

It localises to the secreted. Functionally, probable serine protease inhibitor. The polypeptide is Probable serpin E3 (serpine3) (Danio rerio (Zebrafish)).